Reading from the N-terminus, the 340-residue chain is MQNYTLSQIAELLSAELQGDGALEITKIATLAHARSGHIAFLANKKYRSQLEVTQASAVIVSEADAPYFNGNKLIVANPYVSYAKLAQLMDTTPRSAATGIHPSAVVHPNATVSKSAAIGANTVIESNAIINDNVQIGPNSFIGEGVKIGSGTKLWSNVTIYHNVEIGSDCLLQANSVIGSDGFGYANERGQWIKIPQLGSVIIGDKVEIGASTTIDRGALDDTIIHSNVIIDNQCQIAHNVEVNSGTAIAGCTVLAGSVTIGKNCQIGGMTAINGHMSVCDGVIITGMSMVTKSITEPGIYSSGIPHTTNKEWRKSIAHLRNLSEMKSRIKALEQLNKP.

His-240 acts as the Proton acceptor in catalysis.

The protein belongs to the transferase hexapeptide repeat family. LpxD subfamily. Homotrimer.

It catalyses the reaction a UDP-3-O-[(3R)-3-hydroxyacyl]-alpha-D-glucosamine + a (3R)-hydroxyacyl-[ACP] = a UDP-2-N,3-O-bis[(3R)-3-hydroxyacyl]-alpha-D-glucosamine + holo-[ACP] + H(+). The protein operates within bacterial outer membrane biogenesis; LPS lipid A biosynthesis. Its function is as follows. Catalyzes the N-acylation of UDP-3-O-acylglucosamine using 3-hydroxyacyl-ACP as the acyl donor. Is involved in the biosynthesis of lipid A, a phosphorylated glycolipid that anchors the lipopolysaccharide to the outer membrane of the cell. This is UDP-3-O-acylglucosamine N-acyltransferase from Pseudoalteromonas translucida (strain TAC 125).